Reading from the N-terminus, the 293-residue chain is Nucleotide-binding protein DvMF_0424 (293 aa).

Position 13–20 (13–20) interacts with ATP; sequence GLSGAGKS. 65 to 68 contributes to the GTP binding site; the sequence is DLRE.

The protein belongs to the RapZ-like family.

Displays ATPase and GTPase activities. This is Nucleotide-binding protein DvMF_0424 from Nitratidesulfovibrio vulgaris (strain DSM 19637 / Miyazaki F) (Desulfovibrio vulgaris).